The following is a 309-amino-acid chain: Prepilin leader peptidase/N-methyltransferase (309 aa).

Residues Met-35 to Val-55 form a helical membrane-spanning segment. Cys-96, Cys-99, Cys-121, and Cys-124 together coordinate Zn(2+). 6 consecutive transmembrane segments (helical) span residues Leu-147–Leu-167, Leu-183–Leu-203, Val-207–Leu-227, Ile-230–Trp-250, Leu-253–Trp-273, and Phe-288–Gly-308.

Belongs to the peptidase A24 family. It depends on Zn(2+) as a cofactor.

Its subcellular location is the cell inner membrane. The catalysed reaction is Typically cleaves a -Gly-|-Phe- bond to release an N-terminal, basic peptide of 5-8 residues from type IV prepilin, and then N-methylates the new N-terminal amino group, the methyl donor being S-adenosyl-L-methionine.. Plays an essential role in type IV pili and type II pseudopili formation by proteolytically removing the leader sequence from substrate proteins and subsequently monomethylating the alpha-amino group of the newly exposed N-terminal phenylalanine. This is Prepilin leader peptidase/N-methyltransferase (gspO) from Burkholderia pseudomallei (strain K96243).